Here is a 481-residue protein sequence, read N- to C-terminus: 2-succinylbenzoate--CoA ligase (481 aa).

It belongs to the ATP-dependent AMP-binding enzyme family. MenE subfamily.

The catalysed reaction is 2-succinylbenzoate + ATP + CoA = 2-succinylbenzoyl-CoA + AMP + diphosphate. The protein operates within quinol/quinone metabolism; 1,4-dihydroxy-2-naphthoate biosynthesis; 1,4-dihydroxy-2-naphthoate from chorismate: step 5/7. It participates in quinol/quinone metabolism; menaquinone biosynthesis. Converts 2-succinylbenzoate (OSB) to 2-succinylbenzoyl-CoA (OSB-CoA). This Bacillus cereus (strain Q1) protein is 2-succinylbenzoate--CoA ligase.